The chain runs to 298 residues: Probable pyridoxal 5'-phosphate synthase subunit SNZ3 (298 aa).

D21 serves as a coordination point for D-ribose 5-phosphate. Catalysis depends on K78, which acts as the Schiff-base intermediate with D-ribose 5-phosphate. Residues G150, G213, and 234–235 (GS) contribute to the D-ribose 5-phosphate site.

This sequence belongs to the PdxS/SNZ family. As to quaternary structure, homohexamer. Interacts with THI11.

It carries out the reaction aldehydo-D-ribose 5-phosphate + D-glyceraldehyde 3-phosphate + L-glutamine = pyridoxal 5'-phosphate + L-glutamate + phosphate + 3 H2O + H(+). The protein operates within cofactor biosynthesis; pyridoxal 5'-phosphate biosynthesis. Catalyzes the formation of pyridoxal 5'-phosphate from ribose 5-phosphate (RBP), glyceraldehyde 3-phosphate (G3P) and ammonia. The ammonia is provided by a SNO isoform. Can also use ribulose 5-phosphate and dihydroxyacetone phosphate as substrates, resulting from enzyme-catalyzed isomerization of RBP and G3P, respectively. This Saccharomyces cerevisiae (strain ATCC 204508 / S288c) (Baker's yeast) protein is Probable pyridoxal 5'-phosphate synthase subunit SNZ3 (SNZ3).